The following is a 194-amino-acid chain: UPF0215 protein DR_A0167 (194 aa).

The protein belongs to the UPF0215 family.

In Deinococcus radiodurans (strain ATCC 13939 / DSM 20539 / JCM 16871 / CCUG 27074 / LMG 4051 / NBRC 15346 / NCIMB 9279 / VKM B-1422 / R1), this protein is UPF0215 protein DR_A0167.